Reading from the N-terminus, the 208-residue chain is Uracil phosphoribosyltransferase (208 aa).

5-phospho-alpha-D-ribose 1-diphosphate-binding positions include arginine 78, arginine 103, and 130–138; that span reads DPMLATGGS. Uracil is bound by residues isoleucine 193 and 198 to 200; that span reads GDA. Aspartate 199 provides a ligand contact to 5-phospho-alpha-D-ribose 1-diphosphate.

Belongs to the UPRTase family. It depends on Mg(2+) as a cofactor.

It carries out the reaction UMP + diphosphate = 5-phospho-alpha-D-ribose 1-diphosphate + uracil. It functions in the pathway pyrimidine metabolism; UMP biosynthesis via salvage pathway; UMP from uracil: step 1/1. Allosterically activated by GTP. Catalyzes the conversion of uracil and 5-phospho-alpha-D-ribose 1-diphosphate (PRPP) to UMP and diphosphate. This is Uracil phosphoribosyltransferase from Neisseria gonorrhoeae (strain ATCC 700825 / FA 1090).